We begin with the raw amino-acid sequence, 311 residues long: Tricarboxylate transport protein, mitochondrial (311 aa).

Residues 1 to 13 (MAAPRGPRALSAA) constitute a propeptide, removed in mature form. Residues 1-21 (MAAPRGPRALSAAAPGSGKPK) are disordered. 3 Solcar repeats span residues 23–111 (THPG…LSNH), 122–208 (RRGL…LRNW), and 218–303 (MNPL…VVKL). The next 3 helical transmembrane spans lie at 29 to 46 (ILAG…TFPT), 86 to 105 (GLSS…FGMF), and 129 to 143 (LGAG…VCPM). Ser-156 is modified (phosphoserine). A run of 3 helical transmembrane segments spans residues 183–202 (GLTA…FFVM), 224–241 (GVFG…NTPL), and 278–297 (GTVP…FIIY).

The protein belongs to the mitochondrial carrier (TC 2.A.29) family. In terms of processing, possesses a short cleavable presequence, which, however, is found to be dispensable both for targeting to mitochondria and insertion into the inner membrane. However, the presequence is required to keep SLC25A1 in a soluble state and thus in an import-competent state. Mature SLC25A1 lacking the presequence is prone to aggregation. In terms of tissue distribution, expressed minimally but ubiquitously throughout the adult brain. Detected at higher levels in the olfactory bulb, neocortex and cerebellum. Also expressed in a subset of large cells in the globus pallidus.

The protein localises to the mitochondrion inner membrane. The protein resides in the mitochondrion membrane. It carries out the reaction (S)-malate(in) + citrate(out) = (S)-malate(out) + citrate(in). The enzyme catalyses D-threo-isocitrate(in) + citrate(out) = D-threo-isocitrate(out) + citrate(in). The catalysed reaction is citrate(out) + succinate(in) = citrate(in) + succinate(out). It catalyses the reaction cis-aconitate(in) + citrate(out) = cis-aconitate(out) + citrate(in). It carries out the reaction trans-aconitate(in) + citrate(out) = trans-aconitate(out) + citrate(in). The enzyme catalyses phosphoenolpyruvate(in) + citrate(out) = phosphoenolpyruvate(out) + citrate(in). The catalysed reaction is maleate(in) + citrate(out) = maleate(out) + citrate(in). In terms of biological role, mitochondrial electroneutral antiporter that exports citrate from the mitochondria into the cytosol in exchange for malate. Also able to mediate the exchange of citrate for isocitrate, phosphoenolpyruvate, cis-aconitate and to a lesser extent trans-aconitate, maleate and succinate. In the cytoplasm, citrate plays important roles in fatty acid and sterol synthesis, regulation of glycolysis, protein acetylation, and other physiopathological processes. The protein is Tricarboxylate transport protein, mitochondrial of Mus musculus (Mouse).